We begin with the raw amino-acid sequence, 369 residues long: Capsid protein (369 aa).

It is found in the host nucleus. It localises to the virion. Functionally, self-assembles to form the virion icosahedral capsid. This Avon-Heathcote Estuary associated kieseladnavirus (AHEaBV) protein is Capsid protein.